Here is a 394-residue protein sequence, read N- to C-terminus: Teichoic acid poly(glycerol phosphate) polymerase (394 aa).

It belongs to the CDP-glycerol glycerophosphotransferase family.

The protein resides in the cell membrane. It catalyses the reaction 4-O-[(2R)-glycerylphospho]-N-acetyl-beta-D-mannosaminyl-(1-&gt;4)-N-acetyl-alpha-D-glucosaminyl di-trans,octa-cis-undecaprenyl diphosphate + n CDP-glycerol = 4-O-{[(2R)-1-glycerylphospho](n)-(2R)-1-glycerylphospho}-N-acetyl-beta-D-mannosaminyl-(1-&gt;4)-N-acetyl-alpha-D-glucosaminyl undecaprenyl diphosphate + n CMP + n H(+). In terms of biological role, catalyzes the addition of further 2-8 glycerol phosphate units from CDP-glycerol to the single glycerol phosphate unit bound to the prenolpyrophosphate-linked disaccharide. The function in the cell is unknown since the product is not part of the poly(ribitol phosphate) teichoic acid found in the cell walls. In Bacillus spizizenii (strain ATCC 23059 / NRRL B-14472 / W23) (Bacillus subtilis subsp. spizizenii), this protein is Teichoic acid poly(glycerol phosphate) polymerase (tarF).